The chain runs to 148 residues: Large ribosomal subunit protein uL15 (148 aa).

A disordered region spans residues 1 to 51 (MNLSNLKPAEGSTKTRKRIGRGAGSGLGGTSTRGHKGAKSRSGYSKKVGFE). The segment covering 21-31 (RGAGSGLGGTS) has biased composition (gly residues).

This sequence belongs to the universal ribosomal protein uL15 family. In terms of assembly, part of the 50S ribosomal subunit.

Its function is as follows. Binds to the 23S rRNA. The chain is Large ribosomal subunit protein uL15 from Bacteroides thetaiotaomicron (strain ATCC 29148 / DSM 2079 / JCM 5827 / CCUG 10774 / NCTC 10582 / VPI-5482 / E50).